A 447-amino-acid chain; its full sequence is uncharacterized protein (447 aa).

The protein resides in the mitochondrion. This is an uncharacterized protein from Dictyostelium discoideum (Social amoeba).